Reading from the N-terminus, the 484-residue chain is Cobyric acid synthase (484 aa).

Residues 251 to 438 (ALKIAVPVLP…LHGLFASDAY (188 aa)) enclose the GATase cobBQ-type domain. C333 acts as the Nucleophile in catalysis. Residue H430 is part of the active site.

This sequence belongs to the CobB/CobQ family. CobQ subfamily.

Its pathway is cofactor biosynthesis; adenosylcobalamin biosynthesis. Functionally, catalyzes amidations at positions B, D, E, and G on adenosylcobyrinic A,C-diamide. NH(2) groups are provided by glutamine, and one molecule of ATP is hydrogenolyzed for each amidation. This chain is Cobyric acid synthase, found in Rhizobium etli (strain CIAT 652).